The sequence spans 209 residues: Protein Sxy (209 aa).

The protein belongs to the Sxy/TfoX family.

In terms of biological role, induces low levels of natural DNA uptake by inducing transcription of the competence genes (the CRP-S regulon) required for DNA transformation. Induction of the CRP-S regulon also requires Sxy-activated promoter (CRP-S), cAMP receptor protein (CRP) and cAMP. Induces CRP-S site-containing genes which are involved in genome maintenance and transcription or encoding transposases and toxin-antitoxin pairs. This is Protein Sxy from Escherichia coli (strain K12).